The following is a 256-amino-acid chain: Small ribosomal subunit protein eS1 (256 aa).

Residues 1-18 (MAVGKNKRLSKGKKGIKK) are compositionally biased toward basic residues. Residues 1–20 (MAVGKNKRLSKGKKGIKKRT) are disordered. Ala2 carries the post-translational modification N-acetylalanine; partial.

The protein belongs to the eukaryotic ribosomal protein eS1 family. In terms of assembly, component of the small ribosomal subunit. Mature ribosomes consist of a small (40S) and a large (60S) subunit. The 40S subunit contains about 33 different proteins and 1 molecule of RNA (18S). The 60S subunit contains about 49 different proteins and 3 molecules of RNA (25S, 5.8S and 5S).

It is found in the cytoplasm. This chain is Small ribosomal subunit protein eS1 (rps1), found in Emericella nidulans (strain FGSC A4 / ATCC 38163 / CBS 112.46 / NRRL 194 / M139) (Aspergillus nidulans).